The primary structure comprises 247 residues: Coproheme decarboxylase (247 aa).

Residues Arg-129, 143-147 (YPMDK), His-170, Gln-183, and Ser-221 contribute to the Fe-coproporphyrin III site. The active site involves Tyr-143.

This sequence belongs to the ChdC family. Type 1 subfamily. Requires Fe-coproporphyrin III as cofactor.

It catalyses the reaction Fe-coproporphyrin III + 2 H2O2 + 2 H(+) = heme b + 2 CO2 + 4 H2O. The catalysed reaction is Fe-coproporphyrin III + H2O2 + H(+) = harderoheme III + CO2 + 2 H2O. The enzyme catalyses harderoheme III + H2O2 + H(+) = heme b + CO2 + 2 H2O. It functions in the pathway porphyrin-containing compound metabolism; protoheme biosynthesis. Involved in coproporphyrin-dependent heme b biosynthesis. Catalyzes the decarboxylation of Fe-coproporphyrin III (coproheme) to heme b (protoheme IX), the last step of the pathway. The reaction occurs in a stepwise manner with a three-propionate intermediate. This chain is Coproheme decarboxylase, found in Bacillus cereus (strain AH820).